The following is a 225-amino-acid chain: MKLIVSVMPRSLEEAQALSATRYLDADIIEWRADYLPKEAILQVAPAIFEKFAGRELVFTLRTRSEGGEIDLSPEEYIHLIKEVAQFYQPDYIDFEYYSYKDVFEEMLDFPNLVLSYHNFQETPENMMEILSELTILNPKLVKVAVMAHTEQDVLDLMNYTRGFKTLNPEQEYVTISMGKVGKVSRITADVTGSSWSFASLDEVSAPGQISLASMKKIREILDEA.

3-dehydroquinate contacts are provided by residues S6, E30 to R32, and R62. H118 serves as the catalytic Proton donor/acceptor. Catalysis depends on K143, which acts as the Schiff-base intermediate with substrate. Positions 186, 205, and 209 each coordinate 3-dehydroquinate.

Belongs to the type-I 3-dehydroquinase family. In terms of assembly, homodimer.

It catalyses the reaction 3-dehydroquinate = 3-dehydroshikimate + H2O. The protein operates within metabolic intermediate biosynthesis; chorismate biosynthesis; chorismate from D-erythrose 4-phosphate and phosphoenolpyruvate: step 3/7. Involved in the third step of the chorismate pathway, which leads to the biosynthesis of aromatic amino acids. Catalyzes the cis-dehydration of 3-dehydroquinate (DHQ) and introduces the first double bond of the aromatic ring to yield 3-dehydroshikimate. This is 3-dehydroquinate dehydratase from Streptococcus pneumoniae (strain ATCC 700669 / Spain 23F-1).